Consider the following 1464-residue polypeptide: Glutamate receptor ionotropic, NMDA 2A (1464 aa).

Positions 1–22 (MGRVGYWTLLVLPALLVWRGPA) are cleaved as a signal peptide. Residues 23–556 (PSAAAEKGPP…SAFLEPFSAS (534 aa)) lie on the Extracellular side of the membrane. His-44 contacts Zn(2+). Asn-75 carries an N-linked (GlcNAc...) asparagine glycan. Cysteines 87 and 320 form a disulfide. Zn(2+) contacts are provided by His-128, Glu-266, and Asp-282. Asn-340, Asn-380, Asn-443, and Asn-444 each carry an N-linked (GlcNAc...) asparagine glycan. Disulfide bonds link Cys-429-Cys-455 and Cys-436-Cys-456. Residues Ser-511, Thr-513, and Arg-518 each coordinate L-glutamate. An N-linked (GlcNAc...) asparagine glycan is attached at Asn-541. Residues 557–576 (VWVMMFVMLLIVSAIAVFVF) traverse the membrane as a helical segment. At 577-600 (EYFSPVGYNRNLAKGKAPHGPSFT) the chain is on the cytoplasmic side. The interval 599–620 (FTIGKAIWLLWGLVFNNSVPVQ) is pore-forming. An intramembrane region (discontinuously helical) is located at residues 601 to 615 (IGKAIWLLWGLVFNN). Residues 616-625 (SVPVQNPKGT) are Cytoplasmic-facing. Residues 626–646 (TSKIMVSVWAFFAVIFLASYT) traverse the membrane as a helical segment. Residues 647–814 (ANLAAFMIQE…NEVMSSQLDI (168 aa)) lie on the Extracellular side of the membrane. Asn-687 carries an N-linked (GlcNAc...) asparagine glycan. Residues Ser-689, Thr-690, and Asp-731 each contribute to the L-glutamate site. A disulfide bridge links Cys-745 with Cys-800. The chain crosses the membrane as a helical span at residues 815–835 (DNMAGVFYMLAAAMALSLITF). Over 836–1464 (IWEHLFYWKL…KKMPSIESDV (629 aa)) the chain is Cytoplasmic. A phosphoserine mark is found at Ser-882, Ser-890, and Ser-929. 2 stretches are compositionally biased toward polar residues: residues 997–1010 (EVAV…NSRP) and 1023–1032 (QDSLSQNPVS). The interval 997–1083 (EVAVSTESKA…PDNSKNHKTK (87 aa)) is disordered. Ser-1025 bears the Phosphoserine mark. Composition is skewed to basic and acidic residues over residues 1033 to 1043 (QRDEATAENRT) and 1052 to 1061 (LPEEMAHSDI). A phosphoserine mark is found at Ser-1059 and Ser-1062. Positions 1070–1083 (CHREPDNSKNHKTK) are enriched in basic and acidic residues. Ser-1198 and Ser-1291 each carry phosphoserine. Residues 1335-1372 (KLSGKKSSLFPQGLEDSKRSKSLLPDHTSDNPFLHSHR) form a disordered region. Positions 1462–1464 (SDV) match the PDZ-binding motif.

The protein belongs to the glutamate-gated ion channel (TC 1.A.10.1) family. NR2A/GRIN2A subfamily. Heterotetramer. Forms heterotetrameric channels composed of two GluN1/zeta subunits (GRIN1), and two identical GluN2/epsilon subunits (GRIN2A, GRIN2B, GRIN2C or GRIN2D) or GluN3 subunits (GRIN3A or GRIN3B) (in vitro). Can also form heterotetrameric channels that contain at least two GluN1 subunits and at least two different GluN2 subunits (or a combination of one GluN2 and one GluN3 subunits) (in vitro). In vivo, the subunit composition may depend on the expression levels of the different subunits. Found in a complex with GRIN1, GRIN3A and PPP2CB. Found in a complex with GRIN1 and GRIN3B. Interacts with AIP1. Interacts with HIP1 and NETO1. Interacts with SNX27 (via PDZ domain); the interaction is required for recycling to the plasma membrane when endocytosed and prevent degradation in lysosomes. Interacts with PDZ domains of PATJ and DLG4. Interacts with LRFN2. Interacts with RPH3A and DLG4; this ternary complex regulates NMDA receptor composition at postsynaptic membranes. Interacts with SORCS2. Interacts with ARC; preventing ARC oligomerization. Interacts (via the extreme C-terminus) with FRMPD2 (the second PDZ domain); the interaction is direct and is likely to promote NMDAR-mediated neural signal transmission. GRIN2A binds FRMPD2 with lower affinity than GRIN2B.

It localises to the cell projection. The protein resides in the dendritic spine. The protein localises to the cell membrane. Its subcellular location is the synapse. It is found in the postsynaptic cell membrane. It localises to the cytoplasmic vesicle membrane. It catalyses the reaction Ca(2+)(in) = Ca(2+)(out). The enzyme catalyses Na(+)(in) = Na(+)(out). It carries out the reaction K(+)(in) = K(+)(out). NMDA glutamate receptor activity is inhibited by endogenous Mg(2+) in a voltage-dependent manner. NMDA glutamate receptor activity is inhibited by endogenous Zn(2+). NMDA glutamate receptor activity is inhibited by endogenous protons. Component of N-methyl-D-aspartate (NMDA) receptors (NMDARs) that function as heterotetrameric, ligand-gated cation channels with high calcium permeability and voltage-dependent block by Mg(2+). NMDARs participate in synaptic plasticity for learning and memory formation by contributing to the slow phase of excitatory postsynaptic current, long-term synaptic potentiation, and learning. Channel activation requires binding of the neurotransmitter L-glutamate to the GluN2 subunit, glycine or D-serine binding to the GluN1 subunit, plus membrane depolarization to eliminate channel inhibition by Mg(2+). NMDARs mediate simultaneously the potasium efflux and the influx of calcium and sodium. Each GluN2 subunit confers differential attributes to channel properties, including activation, deactivation and desensitization kinetics, pH sensitivity, Ca2(+) permeability, and binding to allosteric modulators. Participates in the synaptic plasticity regulation through activation by the L-glutamate releaseed by BEST1, into the synaptic cleft, upon F2R/PAR-1 activation in astrocyte. The sequence is that of Glutamate receptor ionotropic, NMDA 2A from Homo sapiens (Human).